The sequence spans 246 residues: Putative protein phosphatase 2C-type (246 aa).

Residues 2-240 (KISLKTDIGQ…DNITIALVHN (239 aa)) form the PPM-type phosphatase domain. 4 residues coordinate Mn(2+): Asp36, Gly37, Asp192, and Asp231.

Mg(2+) serves as cofactor. Mn(2+) is required as a cofactor.

It catalyses the reaction O-phospho-L-seryl-[protein] + H2O = L-seryl-[protein] + phosphate. The catalysed reaction is O-phospho-L-threonyl-[protein] + H2O = L-threonyl-[protein] + phosphate. The polypeptide is Putative protein phosphatase 2C-type (Streptococcus pyogenes serotype M6 (strain ATCC BAA-946 / MGAS10394)).